A 132-amino-acid chain; its full sequence is UPF0357 protein YCL012C (132 aa).

An N-terminal signal peptide occupies residues 1-25; the sequence is MWDLFYFKVFFWVVLISLCIFMVHR.

This sequence belongs to the UPF0357 family.

The protein is UPF0357 protein YCL012C (YCL012C) of Saccharomyces bayanus (Yeast).